Reading from the N-terminus, the 164-residue chain is Peptide deformylase-like (164 aa).

Glu-134 is an active-site residue.

This sequence belongs to the polypeptide deformylase family.

The sequence is that of Peptide deformylase-like from Brucella melitensis biotype 1 (strain ATCC 23456 / CCUG 17765 / NCTC 10094 / 16M).